The sequence spans 1820 residues: Afadin (1820 aa).

The Ras-associating 1 domain occupies 39–133; the sequence is FHGVMRFYFQ…GRFVLKNEND (95 aa). Residues 129–196 form a disordered region; sequence KNENDAIPAK…PSQGDDSENS (68 aa). Residues 146–186 are a coiled coil; the sequence is EKQEKEGVIQNFKRTLSKKEKKEKKKKEKEALRQASDKEER. A compositionally biased stretch (basic residues) spans 160–172; it reads TLSKKEKKEKKKK. Over residues 173–189 the composition is skewed to basic and acidic residues; sequence EKEALRQASDKEERPSQ. Phosphoserine occurs at positions 216, 246, and 256. The Ras-associating 2 domain maps to 246–348; the sequence is SGGTLRIYAD…LVFQLKRRPP (103 aa). Positions 356–371 are enriched in basic and acidic residues; sequence KKHVEGKSLKGKDRAD. The interval 356-377 is disordered; it reads KKHVEGKSLKGKDRADGSGYGS. A phosphoserine mark is found at Ser391 and Ser424. The region spanning 426-492 is the FHA domain; that stretch reads TEVGTEKFDD…LQSGMRLQFG (67 aa). 13 positions are modified to phosphoserine: Ser512, Ser557, Ser562, Ser655, Ser1083, Ser1107, Ser1126, Ser1140, Ser1143, Ser1172, Ser1173, Ser1182, and Ser1199. The segment at 538-569 is disordered; that stretch reads GDVHSGTALPASRSTTRLDSDRVSSASSTAER. The Dilute domain maps to 653–908; that stretch reads DISPTERTHK…IENVVAVAEN (256 aa). The PDZ domain occupies 1007–1093; that stretch reads IITVTLKKQN…VVTLEVAKQG (87 aa). The segment at 1107-1194 is disordered; sequence SPMMQRISDR…GKGPYTSGTA (88 aa). The span at 1113-1128 shows a compositional bias: basic and acidic residues; sequence ISDRRGSGKPRPKSEG. Positions 1132 to 1143 are enriched in polar residues; the sequence is YNNSAQNGSPES. Residues 1152-1172 show a composition bias toward basic and acidic residues; the sequence is SEPKKLPGDDRLMKNRADHRS. The segment at 1203–1222 is disordered; it reads GNLCTEEQSPPPRPEAYPIP. Residue Thr1232 is modified to Phosphothreonine. 3 disordered regions span residues 1235-1278, 1308-1527, and 1567-1716; these read ASKS…SQEE, QSSS…KQQQ, and RLQE…LKTQ. Ser1238 carries the phosphoserine modification. The segment covering 1252–1262 has biased composition (basic and acidic residues); that stretch reads YEEKPHVHTES. The residue at position 1275 (Ser1275) is a Phosphoserine. Positions 1309 to 1318 are enriched in low complexity; sequence SSSVESSTSS. Positions 1325–1337 are enriched in polar residues; the sequence is SSKSVTPASTLTK. A Phosphoserine modification is found at Ser1328. A Phosphothreonine modification is found at Thr1330. Pro residues predominate over residues 1364–1373; the sequence is LPPPPPPPPV. The segment covering 1407–1440 has biased composition (basic and acidic residues); sequence EWKKREEHQRWYEKEKARLEEERERKRREQERKL. The stretch at 1410–1446 forms a coiled coil; that stretch reads KREEHQRWYEKEKARLEEERERKRREQERKLGQMRSQ. Polar residues predominate over residues 1443–1457; that stretch reads MRSQTLNPASFSPLA. Positions 1487 to 1503 are enriched in basic and acidic residues; that stretch reads TIERKDLQYITISKEEL. A phosphoserine mark is found at Ser1499 and Ser1510. The segment covering 1513-1526 has biased composition (basic and acidic residues); that stretch reads PWKRDAREKLEKQQ. Residues 1523 to 1561 adopt a coiled-coil conformation; that stretch reads EKQQQMHIVDMLSKEIHELQNKVDRTAEESDRLRKLMLE. Positions 1576 to 1587 are enriched in acidic residues; the sequence is EDDDEEEDDDVD. A coiled-coil region spans residues 1593–1665; the sequence is QRLEAERRAR…SRLEAERRRQ (73 aa). The span at 1595–1675 shows a compositional bias: basic and acidic residues; that stretch reads LEAERRARMQ…HEEAARRLLE (81 aa). Phosphoserine is present on residues Ser1694, Ser1719, Ser1770, and Ser1795. The tract at residues 1734–1820 is disordered; it reads EEEDYGPAGP…TELENELNTK (87 aa). The span at 1759–1772 shows a compositional bias: basic and acidic residues; the sequence is APREAREKLTRSQD. Basic and acidic residues predominate over residues 1800–1820; the sequence is VSDKVKASRKLTELENELNTK. N6-acetyllysine is present on Lys1803.

Homodimer. Interacts with F-actin, nectin and NECTIN3. Essential for the association of nectin and E-cadherin. Isoform 2/s-afadin does not interact with F-actin. Interacts with ZO-1 and occludin, but probably in an indirect manner. Interacts with RIT1, RIT2, NRXN1 and BCR. Interacts with ADAM10; the interaction locks ADAM10 at adherens junctions following ADAM10 recruitment to adherens junctions by TSPAN33. In terms of tissue distribution, isoform 1 is expressed only in a restricted set of epithelial structures during early embryogenesis.

The protein localises to the cell junction. The protein resides in the adherens junction. Belongs to an adhesion system, probably together with the E-cadherin-catenin system, which plays a role in the organization of homotypic, interneuronal and heterotypic cell-cell adherens junctions (AJs). Nectin- and actin-filament-binding protein that connects nectin to the actin cytoskeleton. May play a key role in the organization of epithelial structures of the embryonic ectoderm. Essential for the organization of adherens junctions. The chain is Afadin from Mus musculus (Mouse).